Consider the following 290-residue polypeptide: PIH1 domain-containing protein 1 (290 aa).

Phosphoserine is present on residues S12, S16, and S173.

The protein belongs to the PIH1 family. As to quaternary structure, component of the R2TP complex composed at least of RUVBL1, RUVBL2, RPAP3 and PIHD1. Component of the PAQosome complex which is responsible for the biogenesis of several protein complexes and which consists of R2TP complex members RUVBL1, RUVBL2, RPAP3 and PIH1D1, URI complex members PFDN2, PFDN6, PDRG1, UXT and URI1 as well as ASDURF, POLR2E and DNAAF10/WDR92. Interacts with phosphorylated TELO2 and mediates interaction of TELO2 with the R2TP complex. Interacts with phosphorylated ECD, EFTUD2/SNRP116, RPB1 and UBR5 and with RPB1 in a phosphorylation-independent manner. Interacts with the core C/D box snoRNP particle components NOP58 and FBL and with RUVBL1/TIP49. Interacts with RPAP3 and DNAAF10. Interacts with histone H4 and with SWI/SNF complex member SMARCB1/SNF5. Interacts with the mTORC1 complex member RPTOR. Interacts with MSL1.

It localises to the nucleus. Involved in the assembly of C/D box small nucleolar ribonucleoprotein (snoRNP) particles. Recruits the SWI/SNF complex to the core promoter of rRNA genes and enhances pre-rRNA transcription. Mediates interaction of TELO2 with the R2TP complex which is necessary for the stability of MTOR and SMG1. Positively regulates the assembly and activity of the mTORC1 complex. The polypeptide is PIH1 domain-containing protein 1 (Pih1d1) (Rattus norvegicus (Rat)).